Here is a 377-residue protein sequence, read N- to C-terminus: Putrescine transport ATP-binding protein PotG (377 aa).

The ABC transporter domain maps to 20–250 (LEIRNLTKSY…PTTRYSAEFI (231 aa)). 52 to 59 (GASGCGKS) provides a ligand contact to ATP.

It belongs to the ABC transporter superfamily. In terms of assembly, the complex is composed of two ATP-binding proteins (PotG), two transmembrane proteins (PotH and PotI) and a solute-binding protein (PotF).

It is found in the cell inner membrane. The catalysed reaction is putrescine(out) + ATP + H2O = putrescine(in) + ADP + phosphate + H(+). Its activity is regulated as follows. Transport is feedback inhibited by intracellular polyamines. Its function is as follows. Part of the ABC transporter complex PotFGHI involved in putrescine uptake. Responsible for energy coupling to the transport system. Imports putrescine for maintenance of the optimal concentration of polyamines necessary for cell growth in the presence of glucose. This Escherichia coli (strain K12) protein is Putrescine transport ATP-binding protein PotG.